The primary structure comprises 209 residues: Thiamine-phosphate synthase (209 aa).

4-amino-2-methyl-5-(diphosphooxymethyl)pyrimidine is bound by residues glutamine 35 to lysine 39 and asparagine 67. Aspartate 68 and aspartate 86 together coordinate Mg(2+). Threonine 105 contributes to the 4-amino-2-methyl-5-(diphosphooxymethyl)pyrimidine binding site. Residue serine 132–threonine 134 participates in 2-[(2R,5Z)-2-carboxy-4-methylthiazol-5(2H)-ylidene]ethyl phosphate binding. Lysine 135 lines the 4-amino-2-methyl-5-(diphosphooxymethyl)pyrimidine pocket. Glycine 162 lines the 2-[(2R,5Z)-2-carboxy-4-methylthiazol-5(2H)-ylidene]ethyl phosphate pocket.

The protein belongs to the thiamine-phosphate synthase family. Requires Mg(2+) as cofactor.

It carries out the reaction 2-[(2R,5Z)-2-carboxy-4-methylthiazol-5(2H)-ylidene]ethyl phosphate + 4-amino-2-methyl-5-(diphosphooxymethyl)pyrimidine + 2 H(+) = thiamine phosphate + CO2 + diphosphate. It catalyses the reaction 2-(2-carboxy-4-methylthiazol-5-yl)ethyl phosphate + 4-amino-2-methyl-5-(diphosphooxymethyl)pyrimidine + 2 H(+) = thiamine phosphate + CO2 + diphosphate. The enzyme catalyses 4-methyl-5-(2-phosphooxyethyl)-thiazole + 4-amino-2-methyl-5-(diphosphooxymethyl)pyrimidine + H(+) = thiamine phosphate + diphosphate. It participates in cofactor biosynthesis; thiamine diphosphate biosynthesis; thiamine phosphate from 4-amino-2-methyl-5-diphosphomethylpyrimidine and 4-methyl-5-(2-phosphoethyl)-thiazole: step 1/1. Functionally, condenses 4-methyl-5-(beta-hydroxyethyl)thiazole monophosphate (THZ-P) and 2-methyl-4-amino-5-hydroxymethyl pyrimidine pyrophosphate (HMP-PP) to form thiamine monophosphate (TMP). The sequence is that of Thiamine-phosphate synthase from Pseudomonas fluorescens (strain SBW25).